The following is a 205-amino-acid chain: Thiamine-phosphate synthase (205 aa).

4-amino-2-methyl-5-(diphosphooxymethyl)pyrimidine-binding positions include 34 to 38 and Asn66; that span reads QLRCK. Mg(2+) is bound by residues Asp67 and Asp86. Ser105 lines the 4-amino-2-methyl-5-(diphosphooxymethyl)pyrimidine pocket. 131–133 contacts 2-[(2R,5Z)-2-carboxy-4-methylthiazol-5(2H)-ylidene]ethyl phosphate; the sequence is TTT. Lys134 provides a ligand contact to 4-amino-2-methyl-5-(diphosphooxymethyl)pyrimidine. 2-[(2R,5Z)-2-carboxy-4-methylthiazol-5(2H)-ylidene]ethyl phosphate is bound at residue Gly163.

Belongs to the thiamine-phosphate synthase family. Mg(2+) is required as a cofactor.

The catalysed reaction is 2-[(2R,5Z)-2-carboxy-4-methylthiazol-5(2H)-ylidene]ethyl phosphate + 4-amino-2-methyl-5-(diphosphooxymethyl)pyrimidine + 2 H(+) = thiamine phosphate + CO2 + diphosphate. It catalyses the reaction 2-(2-carboxy-4-methylthiazol-5-yl)ethyl phosphate + 4-amino-2-methyl-5-(diphosphooxymethyl)pyrimidine + 2 H(+) = thiamine phosphate + CO2 + diphosphate. It carries out the reaction 4-methyl-5-(2-phosphooxyethyl)-thiazole + 4-amino-2-methyl-5-(diphosphooxymethyl)pyrimidine + H(+) = thiamine phosphate + diphosphate. It participates in cofactor biosynthesis; thiamine diphosphate biosynthesis; thiamine phosphate from 4-amino-2-methyl-5-diphosphomethylpyrimidine and 4-methyl-5-(2-phosphoethyl)-thiazole: step 1/1. Its function is as follows. Condenses 4-methyl-5-(beta-hydroxyethyl)thiazole monophosphate (THZ-P) and 2-methyl-4-amino-5-hydroxymethyl pyrimidine pyrophosphate (HMP-PP) to form thiamine monophosphate (TMP). The protein is Thiamine-phosphate synthase of Neisseria gonorrhoeae (strain ATCC 700825 / FA 1090).